The primary structure comprises 159 residues: Thioredoxin O2, mitochondrial (159 aa).

S40 is subject to Phosphoserine. Positions 43–159 (FAEGDRSSFV…LKSVMEQLYK (117 aa)) constitute a Thioredoxin domain. Catalysis depends on nucleophile residues C83 and C86. C83 and C86 form a disulfide bridge.

It belongs to the thioredoxin family. Plant O-type subfamily.

Its subcellular location is the mitochondrion. Functionally, thiol-disulfide oxidoreductase that may participate in various redox reactions. Possesses insulin disulfide bonds reducing activity. Reduced by thioredoxin reductases NTRA and NTRB. This is Thioredoxin O2, mitochondrial from Arabidopsis thaliana (Mouse-ear cress).